The sequence spans 187 residues: Putative lipoprotein LppJ (187 aa).

Positions 1–28 are cleaved as a signal peptide; that stretch reads MPHSTADRRLRLTRQALLAAAVVPLLAG. Cys29 carries N-palmitoyl cysteine lipidation. Residue Cys29 is the site of S-diacylglycerol cysteine attachment.

It localises to the cell membrane. This Mycobacterium tuberculosis (strain CDC 1551 / Oshkosh) protein is Putative lipoprotein LppJ (lppJ).